A 728-amino-acid chain; its full sequence is Histone demethylase JHD2 (728 aa).

One can recognise a JmjN domain in the interval 4–47 (IPALYPTEQEFKNPIDYLSNPHIKRLGVRYGMVKVVPPNGFCPP). The PHD-type zinc finger occupies 235–285 (DDACIVCRKTNDPKRTILCDSCDKPFHIYCLSPPLERVPSGDWICNTCIVG). A JmjC domain is found at 381-549 (KYCDHPMNLT…YGFGAITDYK (169 aa)). Fe cation-binding residues include histidine 427, aspartate 430, and histidine 517.

The protein belongs to the JARID1 histone demethylase family. The cofactor is Fe(2+).

It localises to the nucleus. The enzyme catalyses N(6),N(6),N(6)-trimethyl-L-lysyl(4)-[histone H3] + 3 2-oxoglutarate + 3 O2 = L-lysyl(4)-[histone H3] + 3 formaldehyde + 3 succinate + 3 CO2. Its function is as follows. Histone demethylase that demethylates 'Lys-4' of histone H3, thereby playing a central role in histone code. Demethylates trimethylated H3 'Lys-4'. The polypeptide is Histone demethylase JHD2 (JHD2) (Saccharomyces cerevisiae (strain ATCC 204508 / S288c) (Baker's yeast)).